An 894-amino-acid polypeptide reads, in one-letter code: Phosphoenolpyruvate carboxylase (894 aa).

Active-site residues include His-143 and Lys-556.

The protein belongs to the PEPCase type 1 family. Requires Mg(2+) as cofactor.

The catalysed reaction is oxaloacetate + phosphate = phosphoenolpyruvate + hydrogencarbonate. Forms oxaloacetate, a four-carbon dicarboxylic acid source for the tricarboxylic acid cycle. The sequence is that of Phosphoenolpyruvate carboxylase from Acinetobacter baumannii (strain ATCC 17978 / DSM 105126 / CIP 53.77 / LMG 1025 / NCDC KC755 / 5377).